A 160-amino-acid chain; its full sequence is UPF0225 protein PP_1119 (160 aa).

The protein belongs to the UPF0225 family.

This Pseudomonas putida (strain ATCC 47054 / DSM 6125 / CFBP 8728 / NCIMB 11950 / KT2440) protein is UPF0225 protein PP_1119.